Reading from the N-terminus, the 130-residue chain is Cyclin-dependent kinase 4 inhibitor B (130 aa).

ANK repeat units follow at residues 5–34, 38–66, 71–100, and 104–130; these read GSDA…DPNA, FGRR…EPNC, TLTR…RLDV, and WGRL…ATGD. At threonine 12 the chain carries Phosphothreonine.

This sequence belongs to the CDKN2 cyclin-dependent kinase inhibitor family. In terms of assembly, heterodimer of CDKN2B with CDK4 or CDK6. As to expression, expression abundant in lung, less abundant in testis, barely detectable in liver, and not detectable in neonatal kidney, adult kidney, brain, heart, or spleen.

Interacts strongly with CDK4 and CDK6. Potent inhibitor. Potential effector of TGF-beta induced cell cycle arrest. The polypeptide is Cyclin-dependent kinase 4 inhibitor B (Cdkn2b) (Rattus norvegicus (Rat)).